The sequence spans 112 residues: Serum amyloid A protein (112 aa).

Gln1 carries the pyrrolidone carboxylic acid modification. Residues 75–86 (MTRDQVREDTKA) show a composition bias toward basic and acidic residues. The tract at residues 75–112 (MTRDQVREDTKADQFANEWGRSGKDPNHFRPPGLPDKY) is disordered.

This sequence belongs to the SAA family. In terms of tissue distribution, expressed by the liver; secreted in plasma.

Its subcellular location is the secreted. Functionally, major acute phase reactant. Apolipoprotein of the HDL complex. The polypeptide is Serum amyloid A protein (SAA1) (Ovis aries (Sheep)).